A 66-amino-acid polypeptide reads, in one-letter code: Brevinin-1CDYd (66 aa).

A signal peptide spans 1 to 22 (MFTLKKSLLILFFLGTINFSLC). The propeptide occupies 23–44 (EEERNAEEERRDDPEERDVEVE). An intrachain disulfide couples cysteine 60 to cysteine 66.

It belongs to the frog skin active peptide (FSAP) family. Brevinin subfamily. Expressed by the skin glands.

Its subcellular location is the secreted. Functionally, antimicrobial peptide. This Rana dybowskii (Dybovsky's frog) protein is Brevinin-1CDYd.